The sequence spans 169 residues: Allophycocyanin subunit beta-18 (169 aa).

Position 72 is an N4-methylasparagine (N72). C82 lines the (2R,3E)-phycocyanobilin pocket.

The protein belongs to the phycobiliprotein family. As to quaternary structure, heterodimer of an alpha and a beta chain. Post-translationally, contains one covalently linked bilin chromophore.

Its subcellular location is the plastid. The protein resides in the chloroplast thylakoid membrane. Its function is as follows. Light-harvesting photosynthetic bile pigment-protein from the phycobiliprotein complex. Allophycocyanin has a maximum absorption at approximately 650 nanometers. This is Allophycocyanin subunit beta-18 (apcF) from Pyropia yezoensis (Susabi-nori).